The following is a 289-amino-acid chain: Phosphatidylglycerol--prolipoprotein diacylglyceryl transferase (289 aa).

4 consecutive transmembrane segments (helical) span residues 21 to 41 (IGPLSIRWYGLLIASAVLLGI), 53 to 73 (IDPNAIADLAVWLVIGAIPAA), 95 to 115 (IWHGGIAIHGAILGGTAALIL), and 122 to 142 (IPIWQLTDVVVPSLALGQAIG). Residue Arg-143 participates in a 1,2-diacyl-sn-glycero-3-phospho-(1'-sn-glycerol) binding. 3 helical membrane-spanning segments follow: residues 182–202 (PTFLYESLWNLLLCLLLIWLF), 215–235 (GVMTCIYLIGYSLGRIWIEGL), and 247–267 (IAQMVSIVAIAFGVLGLVWIY).

This sequence belongs to the Lgt family.

It localises to the cell inner membrane. It catalyses the reaction L-cysteinyl-[prolipoprotein] + a 1,2-diacyl-sn-glycero-3-phospho-(1'-sn-glycerol) = an S-1,2-diacyl-sn-glyceryl-L-cysteinyl-[prolipoprotein] + sn-glycerol 1-phosphate + H(+). Its pathway is protein modification; lipoprotein biosynthesis (diacylglyceryl transfer). In terms of biological role, catalyzes the transfer of the diacylglyceryl group from phosphatidylglycerol to the sulfhydryl group of the N-terminal cysteine of a prolipoprotein, the first step in the formation of mature lipoproteins. The protein is Phosphatidylglycerol--prolipoprotein diacylglyceryl transferase of Synechococcus elongatus (strain ATCC 33912 / PCC 7942 / FACHB-805) (Anacystis nidulans R2).